The primary structure comprises 171 residues: Ribosome maturation factor RimM (171 aa).

One can recognise a PRC barrel domain in the interval 96-169 (EGEFFIADMI…KMIIDPIKGM (74 aa)).

The protein belongs to the RimM family. Binds ribosomal protein uS19.

It is found in the cytoplasm. In terms of biological role, an accessory protein needed during the final step in the assembly of 30S ribosomal subunit, possibly for assembly of the head region. Essential for efficient processing of 16S rRNA. May be needed both before and after RbfA during the maturation of 16S rRNA. It has affinity for free ribosomal 30S subunits but not for 70S ribosomes. This Clostridioides difficile (strain 630) (Peptoclostridium difficile) protein is Ribosome maturation factor RimM.